Reading from the N-terminus, the 1122-residue chain is Adhesin P1 (1122 aa).

The first 26 residues, Met-1–Ala-26, serve as a signal peptide directing secretion. 3 disordered regions span residues Ala-182–Ala-208, Asp-244–Thr-273, and Gly-541–Asn-562. A compositionally biased stretch (gly residues) spans Ala-195–Ala-208. Over residues Leu-259–Thr-273 the composition is skewed to polar residues. A helical membrane pass occupies residues Ala-1001–Ile-1021. Residues Lys-1066–Glu-1122 form a disordered region. Positions Ala-1079–Glu-1122 are enriched in low complexity.

It belongs to the adhesin P1 family.

The protein localises to the cell membrane. In terms of biological role, could be involved in cytadherence. In Mycoplasmoides gallisepticum (strain R(low / passage 15 / clone 2)) (Mycoplasma gallisepticum), this protein is Adhesin P1 (gapA).